A 389-amino-acid chain; its full sequence is BTB/POZ domain-containing protein KCTD9 (389 aa).

One can recognise a KHA domain in the interval 3–82 (RVTLFLNGSP…PQTDSKPPEG (80 aa)). Position 11 is a phosphoserine (serine 11). Residues 89–161 (DWLTLNVGGR…LRHGQLIVND (73 aa)) form the BTB domain. Pentapeptide repeat domains are found at residues 224 to 256 (NFSGADLSRLDLRYINFKMANLSRCNLAHANLC), 258 to 297 (ANLERADLSGSVLDCANLQGVKMLCSNAEGASLKLCNFED), and 338 to 376 (CNLRGATLAGTDLENCDLSGCDLQEANLRGSNVKGAIFE).

In terms of assembly, forms pentamers. Component of a complex composed of 5 subunits of KCTD9 and 5 CUL3.

Its pathway is protein modification; protein ubiquitination. Its function is as follows. Substrate-specific adapter of a BCR (BTB-CUL3-RBX1) E3 ubiquitin-protein ligase complex, which mediates the ubiquitination of target proteins, leading to their degradation by the proteasome. The sequence is that of BTB/POZ domain-containing protein KCTD9 (KCTD9) from Homo sapiens (Human).